Reading from the N-terminus, the 208-residue chain is Mediator of RNA polymerase II transcription subunit 18 (208 aa).

S66 is modified (phosphoserine).

The protein belongs to the Mediator complex subunit 18 family. As to quaternary structure, component of the Mediator complex, which is composed of MED1, MED4, MED6, MED7, MED8, MED9, MED10, MED11, MED12, MED13, MED13L, MED14, MED15, MED16, MED17, MED18, MED19, MED20, MED21, MED22, MED23, MED24, MED25, MED26, MED27, MED29, MED30, MED31, CCNC, CDK8 and CDC2L6/CDK11. The MED12, MED13, CCNC and CDK8 subunits form a distinct module termed the CDK8 module. Mediator containing the CDK8 module is less active than Mediator lacking this module in supporting transcriptional activation. Individual preparations of the Mediator complex lacking one or more distinct subunits have been variously termed ARC, CRSP, DRIP, PC2, SMCC and TRAP.

It is found in the nucleus. Functionally, component of the Mediator complex, a coactivator involved in the regulated transcription of nearly all RNA polymerase II-dependent genes. Mediator functions as a bridge to convey information from gene-specific regulatory proteins to the basal RNA polymerase II transcription machinery. Mediator is recruited to promoters by direct interactions with regulatory proteins and serves as a scaffold for the assembly of a functional preinitiation complex with RNA polymerase II and the general transcription factors. The protein is Mediator of RNA polymerase II transcription subunit 18 (MED18) of Bos taurus (Bovine).